Reading from the N-terminus, the 272-residue chain is MSTRNDVHLGHKARKRFGQNFLNDPYVIDGIVSAINPLPGQNLVEIGPGLGAITEPVGREVDKFTVIELDRDLAERLRNHPELGSKLTIHEGDAMRFDFTQLIKENNKLRIFGNLPYNISTPLMFHLFEFHKDVQDMHFMLQKEVVNRLAAGPGTKAYGRLTVMAQYFCKVMPVLEVPPTAFVPPPKVDSAVVRLVPYETLPYPATNLKWLDRVCREGFNQRRKTVRNCYKALLTKEQLEELGINPSMRPENLTLEQFVNMANWLDANHSAE.

Asn-20, Leu-22, Gly-47, Glu-68, Asp-93, and Asn-114 together coordinate S-adenosyl-L-methionine.

This sequence belongs to the class I-like SAM-binding methyltransferase superfamily. rRNA adenine N(6)-methyltransferase family. RsmA subfamily.

Its subcellular location is the cytoplasm. It catalyses the reaction adenosine(1518)/adenosine(1519) in 16S rRNA + 4 S-adenosyl-L-methionine = N(6)-dimethyladenosine(1518)/N(6)-dimethyladenosine(1519) in 16S rRNA + 4 S-adenosyl-L-homocysteine + 4 H(+). Its function is as follows. Specifically dimethylates two adjacent adenosines (A1518 and A1519) in the loop of a conserved hairpin near the 3'-end of 16S rRNA in the 30S particle. May play a critical role in biogenesis of 30S subunits. This Aliivibrio fischeri (strain ATCC 700601 / ES114) (Vibrio fischeri) protein is Ribosomal RNA small subunit methyltransferase A.